The sequence spans 600 residues: Adenine deaminase 2 (600 aa).

The protein belongs to the metallo-dependent hydrolases superfamily. Adenine deaminase family. It depends on Mn(2+) as a cofactor.

The catalysed reaction is adenine + H2O + H(+) = hypoxanthine + NH4(+). In Bradyrhizobium sp. (strain ORS 278), this protein is Adenine deaminase 2.